The primary structure comprises 338 residues: Aspartate carbamoyltransferase catalytic subunit (338 aa).

Residues R59 and T60 each contribute to the carbamoyl phosphate site. K87 is an L-aspartate binding site. The carbamoyl phosphate site is built by R109, H142, and Q145. Positions 182 and 253 each coordinate L-aspartate. Positions 294 and 295 each coordinate carbamoyl phosphate.

Belongs to the aspartate/ornithine carbamoyltransferase superfamily. ATCase family. As to quaternary structure, heterododecamer (2C3:3R2) of six catalytic PyrB chains organized as two trimers (C3), and six regulatory PyrI chains organized as three dimers (R2).

It carries out the reaction carbamoyl phosphate + L-aspartate = N-carbamoyl-L-aspartate + phosphate + H(+). The protein operates within pyrimidine metabolism; UMP biosynthesis via de novo pathway; (S)-dihydroorotate from bicarbonate: step 2/3. Its function is as follows. Catalyzes the condensation of carbamoyl phosphate and aspartate to form carbamoyl aspartate and inorganic phosphate, the committed step in the de novo pyrimidine nucleotide biosynthesis pathway. This is Aspartate carbamoyltransferase catalytic subunit from Prochlorococcus marinus subsp. pastoris (strain CCMP1986 / NIES-2087 / MED4).